The sequence spans 544 residues: Chaperonin GroEL (544 aa).

ATP is bound by residues 29-32 (TLGP), K50, 86-90 (DGTTT), G414, and D494.

The protein belongs to the chaperonin (HSP60) family. As to quaternary structure, forms a cylinder of 14 subunits composed of two heptameric rings stacked back-to-back. Interacts with the co-chaperonin GroES.

The protein localises to the cytoplasm. The catalysed reaction is ATP + H2O + a folded polypeptide = ADP + phosphate + an unfolded polypeptide.. In terms of biological role, together with its co-chaperonin GroES, plays an essential role in assisting protein folding. The GroEL-GroES system forms a nano-cage that allows encapsulation of the non-native substrate proteins and provides a physical environment optimized to promote and accelerate protein folding. The chain is Chaperonin GroEL from Amoebophilus asiaticus (strain 5a2).